The following is a 142-amino-acid chain: PDZ domain-containing protein 11 (142 aa).

The 83-residue stretch at 49–131 (TIVLKKPPGA…ILMKVRYFPY (83 aa)) folds into the PDZ domain.

It is found in the cytoplasm. The protein is PDZ domain-containing protein 11 (pdzd11) of Danio rerio (Zebrafish).